A 408-amino-acid polypeptide reads, in one-letter code: Aminoacylase-1 (408 aa).

Residue His80 participates in Zn(2+) binding. Asp82 is a catalytic residue. Asp113 lines the Zn(2+) pocket. Glu147 acts as the Proton acceptor in catalysis. Zn(2+) contacts are provided by Glu148, Glu175, and His373.

It belongs to the peptidase M20A family. As to quaternary structure, homodimer. Interacts with SPHK1. It depends on Zn(2+) as a cofactor.

It is found in the cytoplasm. It carries out the reaction an N-acyl-L-amino acid + H2O = an L-alpha-amino acid + a carboxylate. It catalyses the reaction N-acetyl-L-methionine + H2O = L-methionine + acetate. The enzyme catalyses N-acetyl-L-glutamine + H2O = L-glutamine + acetate. Catalyzes the hydrolysis of N-acetylated amino acids to acetate and free amino acids. The polypeptide is Aminoacylase-1 (Acy1) (Mus musculus (Mouse)).